The chain runs to 282 residues: DNA-directed RNA polymerase III subunit RPC5 (282 aa).

The tract at residues 1–70 is disordered; the sequence is MSIDNKLFVT…TGEEEEDDPV (70 aa). Acidic residues-rich tracts occupy residues 10–35 and 60–70; these read TEED…DMIA and DTGEEEEDDPV. At Thr61 the chain carries Phosphothreonine.

In terms of assembly, component of the RNA polymerase III (Pol III) complex consisting of 17 subunits. Interacts with RPC53/RPC4. RPC53/RPC4, RPC37/RPC5 and RPC11/RPC10 probably form a Pol III subcomplex.

Its subcellular location is the nucleus. Its function is as follows. DNA-dependent RNA polymerase catalyzes the transcription of DNA into RNA using the four ribonucleoside triphosphates as substrates. Specific peripheric component of RNA polymerase III which synthesizes small RNAs, such as 5S rRNA and tRNAs. The RPC53/RPC4-RPC37/RPC5 subcomplex is required for terminator recognition and reinitiation. The polypeptide is DNA-directed RNA polymerase III subunit RPC5 (RPC37) (Saccharomyces cerevisiae (strain ATCC 204508 / S288c) (Baker's yeast)).